A 178-amino-acid chain; its full sequence is Large ribosomal subunit protein uL6 (178 aa).

This sequence belongs to the universal ribosomal protein uL6 family. Part of the 50S ribosomal subunit.

Its function is as follows. This protein binds to the 23S rRNA, and is important in its secondary structure. It is located near the subunit interface in the base of the L7/L12 stalk, and near the tRNA binding site of the peptidyltransferase center. The polypeptide is Large ribosomal subunit protein uL6 (Paenarthrobacter aurescens (strain TC1)).